A 387-amino-acid chain; its full sequence is Queuine tRNA-ribosyltransferase (387 aa).

Aspartate 105 acts as the Proton acceptor in catalysis. Residues 105–109, aspartate 177, and glycine 248 contribute to the substrate site; that span reads DSGGF. Residues 278–284 form an RNA binding region; the sequence is GIGDLPS. The active-site Nucleophile is the aspartate 297. The interval 302-306 is RNA binding; important for wobble base 34 recognition; that stretch reads TRAAR. Residues cysteine 335, cysteine 337, cysteine 340, and histidine 366 each contribute to the Zn(2+) site.

The protein belongs to the queuine tRNA-ribosyltransferase family. As to quaternary structure, homodimer. Within each dimer, one monomer is responsible for RNA recognition and catalysis, while the other monomer binds to the replacement base PreQ1. It depends on Zn(2+) as a cofactor.

It carries out the reaction 7-aminomethyl-7-carbaguanine + guanosine(34) in tRNA = 7-aminomethyl-7-carbaguanosine(34) in tRNA + guanine. It functions in the pathway tRNA modification; tRNA-queuosine biosynthesis. In terms of biological role, catalyzes the base-exchange of a guanine (G) residue with the queuine precursor 7-aminomethyl-7-deazaguanine (PreQ1) at position 34 (anticodon wobble position) in tRNAs with GU(N) anticodons (tRNA-Asp, -Asn, -His and -Tyr). Catalysis occurs through a double-displacement mechanism. The nucleophile active site attacks the C1' of nucleotide 34 to detach the guanine base from the RNA, forming a covalent enzyme-RNA intermediate. The proton acceptor active site deprotonates the incoming PreQ1, allowing a nucleophilic attack on the C1' of the ribose to form the product. After dissociation, two additional enzymatic reactions on the tRNA convert PreQ1 to queuine (Q), resulting in the hypermodified nucleoside queuosine (7-(((4,5-cis-dihydroxy-2-cyclopenten-1-yl)amino)methyl)-7-deazaguanosine). The chain is Queuine tRNA-ribosyltransferase from Protochlamydia amoebophila (strain UWE25).